A 670-amino-acid polypeptide reads, in one-letter code: Solute carrier organic anion transporter family member 1A6 (670 aa).

Topologically, residues Met-1–Lys-20 are cytoplasmic. The chain crosses the membrane as a helical span at residues Val-21–Met-40. Residues Asn-41 to Gly-59 are Extracellular-facing. N-linked (GlcNAc...) asparagine glycosylation is present at Asn-52. The chain crosses the membrane as a helical span at residues Leu-60–Gly-80. Residues Arg-81–Pro-86 lie on the Cytoplasmic side of the membrane. The helical transmembrane segment at Ile-87–Gly-111 threads the bilayer. Over Arg-112–Ser-155 the chain is Extracellular. N-linked (GlcNAc...) asparagine glycans are attached at residues Asn-124 and Asn-135. A helical membrane pass occupies residues Leu-156–Glu-184. Residues Asp-185 to Lys-203 are Cytoplasmic-facing. A helical transmembrane segment spans residues Ile-204–Met-224. At Gly-225 to Val-242 the chain is on the extracellular side. A helical transmembrane segment spans residues Gly-243 to Pro-267. Residues Lys-268–Ser-311 are Cytoplasmic-facing. The segment at Glu-276–Lys-295 is disordered. The chain crosses the membrane as a helical span at residues Leu-312–Val-333. Residues Ser-334–Glu-353 lie on the Extracellular side of the membrane. The helical transmembrane segment at Ala-354–Met-377 threads the bilayer. Topologically, residues Lys-378–Lys-381 are cytoplasmic. Residues Ile-382–Asn-405 traverse the membrane as a helical segment. Topologically, residues Phe-406–Phe-513 are extracellular. A Kazal-like domain is found at Asn-433–Gln-488. Disulfide bonds link Cys-439–Cys-469, Cys-445–Cys-465, and Cys-454–Cys-486. A glycan (N-linked (GlcNAc...) asparagine) is linked at Asn-492. Residues Leu-514–Leu-536 traverse the membrane as a helical segment. Residues Arg-537–Ser-545 are Cytoplasmic-facing. Residues Leu-546–Ile-571 form a helical membrane-spanning segment. At Asp-572–Pro-605 the chain is on the extracellular side. A helical membrane pass occupies residues Ala-606 to Met-623. Topologically, residues Arg-624–Leu-670 are cytoplasmic. The residue at position 634 (Ser-634) is a Phosphoserine. A disordered region spans residues Lys-647–Leu-670.

It belongs to the organo anion transporter (TC 2.A.60) family.

The protein resides in the cell membrane. In terms of biological role, may mediate the Na(+)-independent transport of organic anions. The sequence is that of Solute carrier organic anion transporter family member 1A6 (Slco1a6) from Rattus norvegicus (Rat).